The following is a 545-amino-acid chain: Hyaluronidase PH-20 (545 aa).

Residues 1-35 (MGVLKFKHIFFGSAVELSGVFQIVFIFLLIPCCLT) form the signal peptide. Intrachain disulfides connect C60-C355 and C224-C239. N-linked (GlcNAc...) asparagine glycosylation is present at N82. The active-site Proton donor is E148. N180 is a glycosylation site (N-linked (GlcNAc...) asparagine). Residue N372 is glycosylated (N-linked (GlcNAc...) asparagine). 3 disulfide bridges follow: C380-C391, C385-C439, and C441-C468.

This sequence belongs to the glycosyl hydrolase 56 family. In terms of tissue distribution, testis.

The protein localises to the cell membrane. It catalyses the reaction Random hydrolysis of (1-&gt;4)-linkages between N-acetyl-beta-D-glucosamine and D-glucuronate residues in hyaluronate.. Involved in sperm-egg adhesion. Upon fertilization sperm must first penetrate a layer of cumulus cells that surrounds the egg before reaching the zona pellucida. The cumulus cells are embedded in a matrix containing hyaluronic acid which is formed prior to ovulation. This protein aids in penetrating the layer of cumulus cells by digesting hyaluronic acid. The protein is Hyaluronidase PH-20 (SPAM1) of Oryctolagus cuniculus (Rabbit).